The chain runs to 119 residues: Large ribosomal subunit protein bL20 (119 aa).

It belongs to the bacterial ribosomal protein bL20 family.

Functionally, binds directly to 23S ribosomal RNA and is necessary for the in vitro assembly process of the 50S ribosomal subunit. It is not involved in the protein synthesizing functions of that subunit. In Streptococcus pyogenes serotype M1, this protein is Large ribosomal subunit protein bL20.